A 244-amino-acid polypeptide reads, in one-letter code: NAD(P)H-quinone oxidoreductase subunit K (244 aa).

The [4Fe-4S] cluster site is built by Cys-60, Cys-61, Cys-125, and Cys-156.

The protein belongs to the complex I 20 kDa subunit family. As to quaternary structure, NDH-1 can be composed of about 15 different subunits; different subcomplexes with different compositions have been identified which probably have different functions. It depends on [4Fe-4S] cluster as a cofactor.

The protein resides in the cellular thylakoid membrane. The catalysed reaction is a plastoquinone + NADH + (n+1) H(+)(in) = a plastoquinol + NAD(+) + n H(+)(out). It catalyses the reaction a plastoquinone + NADPH + (n+1) H(+)(in) = a plastoquinol + NADP(+) + n H(+)(out). Its function is as follows. NDH-1 shuttles electrons from an unknown electron donor, via FMN and iron-sulfur (Fe-S) centers, to quinones in the respiratory and/or the photosynthetic chain. The immediate electron acceptor for the enzyme in this species is believed to be plastoquinone. Couples the redox reaction to proton translocation, and thus conserves the redox energy in a proton gradient. Cyanobacterial NDH-1 also plays a role in inorganic carbon-concentration. This Prochlorococcus marinus (strain AS9601) protein is NAD(P)H-quinone oxidoreductase subunit K.